Reading from the N-terminus, the 466-residue chain is MAEEQDLSEVELSPVGSEEPRCLSPGSAPSLGPDGGGGGSGLRASPGPGELGKVKKEQQDGEADDDKFPVCIREAVSQVLSGYDWTLVPMPVRVNGASKSKPHVKRPMNAFMVWAQAARRKLADQYPHLHNAELSKTLGKLWRLLNESDKRPFIEEAERLRMQHKKDHPDYKYQPRRRKNGKAAQGEAECPGGEAEQGGTAAIQAHYKSAHLDHRHPGEGSPMSDGNPEHPSGQSHGPPTPPTTPKTELQSGKADPKRDGRSMGEGGKPHIDFGNVDIGEISHEVMSNMETFDVAELDQYLPPNGHPGHVSSYSAAGYGLGSALAVASGHSAWISKPPGVALPTVSPPGVDAKAQVKTETAGPQGPPHYTDQPSTSQIAYTSLSLPHYGSAFPSISRPQFDYSDHQPSGPYYGHSGQASGLYSAFSYMGPSQRPLYTAISDPSPSGPQSHSPTHWEQPVYTTLSRP.

A disordered region spans residues 1-67 (MAEEQDLSEV…QQDGEADDDK (67 aa)). Residues 23 to 32 (LSPGSAPSLG) show a composition bias toward low complexity. At Ser-24 the chain carries Phosphoserine. The interval 62–102 (EADDDKFPVCIREAVSQVLSGYDWTLVPMPVRVNGASKSKP) is dimerization (DIM). The HMG box DNA-binding region spans 104 to 172 (VKRPMNAFMV…QHKKDHPDYK (69 aa)). Residues 134-145 (LSKTLGKLWRLL) carry the Nuclear export signal motif. Composition is skewed to basic and acidic residues over residues 160–173 (LRMQHKKDHPDYKY) and 254–271 (ADPKRDGRSMGEGGKPHI). Disordered stretches follow at residues 160–199 (LRMQHKKDHPDYKYQPRRRKNGKAAQGEAECPGGEAEQGG), 212–274 (LDHR…IDFG), 354–375 (AQVKTETAGPQGPPHYTDQPST), and 433–466 (RPLYTAISDPSPSGPQSHSPTHWEQPVYTTLSRP). The transactivation domain (TAM) stretch occupies residues 228 to 310 (PEHPSGQSHG…LPPNGHPGHV (83 aa)). The transactivation domain (TAC) stretch occupies residues 353 to 466 (KAQVKTETAG…QPVYTTLSRP (114 aa)). Polar residues predominate over residues 440 to 466 (SDPSPSGPQSHSPTHWEQPVYTTLSRP).

Monomer. Interacts with ARMCX3 at the mitochondrial outer membrane surface. Interacts with PAX3. As to expression, expressed in fetal brain and in adult brain, heart, small intestine and colon.

The protein localises to the cytoplasm. It is found in the nucleus. The protein resides in the mitochondrion outer membrane. Its function is as follows. Transcription factor that plays a central role in developing and mature glia. Specifically activates expression of myelin genes, during oligodendrocyte (OL) maturation, such as DUSP15 and MYRF, thereby playing a central role in oligodendrocyte maturation and CNS myelination. Once induced, MYRF cooperates with SOX10 to implement the myelination program. Transcriptional activator of MITF, acting synergistically with PAX3. Transcriptional activator of MBP, via binding to the gene promoter. This is Transcription factor SOX-10 (SOX10) from Homo sapiens (Human).